Consider the following 511-residue polypeptide: uncharacterized protein (511 aa).

The next 14 membrane-spanning stretches (helical) occupy residues 7 to 27, 46 to 66, 80 to 100, 107 to 127, 134 to 154, 163 to 183, 200 to 220, 226 to 246, 266 to 286, 301 to 321, 329 to 349, 357 to 377, 394 to 414, and 437 to 457; these read WVIS…NTAL, VNPI…GPLL, LPVF…ALMA, GAAT…SFPI, LLVL…LGTI, WLFF…YFFL, AGIL…IFLQ, SGYV…LLIV, VLGL…LSAF, LILL…LSAL, GMLG…WLHI, MFAA…AAGL, TAVQ…IGFF, and LFFI…CMNA. A disordered region spans residues 465-486; the sequence is AHKPHDKAKTAPEKPAVSAQGL.

The protein belongs to the major facilitator superfamily.

The protein resides in the cell membrane. This is an uncharacterized protein from Bacillus subtilis (strain 168).